The following is a 418-amino-acid chain: E3 ubiquitin-protein ligase pellino homolog 1 (418 aa).

Residues Ala-13–Asp-200 form the FHA; atypical domain. Residue Ser-121 is modified to Phosphoserine; by ATM. Thr-127 is subject to Phosphothreonine; by ATM. The segment at Cys-311–Ala-399 is ring-like domain; necessary for ubiqitination of RIPK3.

This sequence belongs to the pellino family. As to quaternary structure, interacts with MAP3K7. Upon IL1B treatment, forms a complex with TRAF6, IRAK1, IRAK4 and MYD88; this complex recruits MAP3K7/TAK1, TAB1 and TAB2 to mediate NF-kappa-B activation. Direct binding of SMAD6 to PELI1 prevents the complex formation and hence negatively regulates IL1R-TLR signaling and eventually NF-kappa-B-mediated gene expression. Interacts (via atypical FHA domain) with RIPK3; preferentially binds to the 'Thr-182' phosphorylated form of RIPK3. Interacts with RIPK1 and IRAK1. In terms of processing, phosphorylation by IRAK1 and IRAK4 enhances its E3 ligase activity. Phosphorylated by ATM in response to DNA damage, promoting localization to DNA double-strand breaks (DSBs) and ability to mediate 'Lys-63'-linked ubiquitination of NBN. Post-translationally, sumoylated. In terms of tissue distribution, expressed at high levels in normal skin but decreased in keratinocytes from toxic epidermal necrolysis (TEN) patients (at protein level).

The protein localises to the chromosome. The enzyme catalyses S-ubiquitinyl-[E2 ubiquitin-conjugating enzyme]-L-cysteine + [acceptor protein]-L-lysine = [E2 ubiquitin-conjugating enzyme]-L-cysteine + N(6)-ubiquitinyl-[acceptor protein]-L-lysine.. It participates in protein modification; protein ubiquitination. Functionally, E3 ubiquitin ligase catalyzing the covalent attachment of ubiquitin moieties onto substrate proteins. Involved in the TLR and IL-1 signaling pathways via interaction with the complex containing IRAK kinases and TRAF6. Acts as a positive regulator of inflammatory response in microglia through activation of NF-kappa-B and MAP kinase. Mediates 'Lys-63'-linked polyubiquitination of IRAK1 allowing subsequent NF-kappa-B activation. Conjugates 'Lys-63'-linked ubiquitin chains to the adapter protein ASC/PYCARD, which in turn is crucial for NLRP3 inflammasome activation. Mediates 'Lys-48'-linked polyubiquitination of RIPK3 leading to its subsequent proteasome-dependent degradation; preferentially recognizes and mediates the degradation of the 'Thr-182' phosphorylated form of RIPK3. Negatively regulates necroptosis by reducing RIPK3 expression. Mediates 'Lys-63'-linked ubiquitination of RIPK1. Following phosphorylation by ATM, catalyzes 'Lys-63'-linked ubiquitination of NBN, promoting DNA repair via homologous recombination. Negatively regulates activation of the metabolic mTORC1 signaling pathway by mediating 'Lys-63'-linked ubiquitination of mTORC1-inhibitory protein TSC1 and thereby promoting TSC1/TSC2 complex stability. The protein is E3 ubiquitin-protein ligase pellino homolog 1 of Homo sapiens (Human).